The sequence spans 257 residues: Coenzyme F420:L-glutamate ligase (257 aa).

Residues 9–12 (VPEV), 38–39 (ST), and Lys-43 contribute to the GTP site. Position 113 (Asp-113) interacts with a divalent metal cation. Asn-116 is a GTP binding site. Positions 154, 155, and 212 each coordinate a divalent metal cation. 210–217 (TGEGDGGT) is a GTP binding site.

This sequence belongs to the CofE family. Homodimer. Requires Mg(2+) as cofactor. Mn(2+) is required as a cofactor. The cofactor is K(+).

It catalyses the reaction oxidized coenzyme F420-0 + GTP + L-glutamate = oxidized coenzyme F420-1 + GDP + phosphate + H(+). The catalysed reaction is oxidized coenzyme F420-1 + GTP + L-glutamate = oxidized coenzyme F420-2 + GDP + phosphate + H(+). It functions in the pathway cofactor biosynthesis; coenzyme F420 biosynthesis. In terms of biological role, catalyzes the GTP-dependent successive addition of two or more gamma-linked L-glutamates to the L-lactyl phosphodiester of 7,8-didemethyl-8-hydroxy-5-deazariboflavin (F420-0) to form coenzyme F420-0-glutamyl-glutamate (F420-2) or polyglutamated F420 derivatives. This is Coenzyme F420:L-glutamate ligase from Haloarcula marismortui (strain ATCC 43049 / DSM 3752 / JCM 8966 / VKM B-1809) (Halobacterium marismortui).